We begin with the raw amino-acid sequence, 1134 residues long: Error-prone DNA polymerase (1134 aa).

The disordered stretch occupies residues M1–Q33.

This sequence belongs to the DNA polymerase type-C family. DnaE2 subfamily.

Its subcellular location is the cytoplasm. It carries out the reaction DNA(n) + a 2'-deoxyribonucleoside 5'-triphosphate = DNA(n+1) + diphosphate. Functionally, DNA polymerase involved in damage-induced mutagenesis and translesion synthesis (TLS). It is not the major replicative DNA polymerase. The protein is Error-prone DNA polymerase of Cutibacterium acnes (strain DSM 16379 / KPA171202) (Propionibacterium acnes).